The sequence spans 84 residues: MIKKLLIAPVRFYQRFISPAFPPSCRFRPTCSNYMIEAIQKHGAKGVLMGLARIFRCHPWSQPGEDPVPDHFSLKRNDTRKQSH.

Positions 60–84 (WSQPGEDPVPDHFSLKRNDTRKQSH) are disordered. A compositionally biased stretch (basic and acidic residues) spans 68 to 84 (VPDHFSLKRNDTRKQSH).

It belongs to the UPF0161 family.

It localises to the cell membrane. Functionally, could be involved in insertion of integral membrane proteins into the membrane. This is Putative membrane protein insertion efficiency factor from Streptococcus gordonii (strain Challis / ATCC 35105 / BCRC 15272 / CH1 / DL1 / V288).